Reading from the N-terminus, the 279-residue chain is Phosphatidylglycerol--prolipoprotein diacylglyceryl transferase (279 aa).

3 helical membrane passes run 22 to 42, 52 to 72, and 89 to 109; these read WYGI…QAAL, LIDI…IYFV, and IWHG…SGII. Residue Arg-137 coordinates a 1,2-diacyl-sn-glycero-3-phospho-(1'-sn-glycerol). A run of 2 helical transmembrane segments spans residues 203-223 and 235-255; these read LGET…FVEA and IRVA…FVIY.

This sequence belongs to the Lgt family.

The protein resides in the cell membrane. It carries out the reaction L-cysteinyl-[prolipoprotein] + a 1,2-diacyl-sn-glycero-3-phospho-(1'-sn-glycerol) = an S-1,2-diacyl-sn-glyceryl-L-cysteinyl-[prolipoprotein] + sn-glycerol 1-phosphate + H(+). The protein operates within protein modification; lipoprotein biosynthesis (diacylglyceryl transfer). Functionally, catalyzes the transfer of the diacylglyceryl group from phosphatidylglycerol to the sulfhydryl group of the N-terminal cysteine of a prolipoprotein, the first step in the formation of mature lipoproteins. The chain is Phosphatidylglycerol--prolipoprotein diacylglyceryl transferase from Staphylococcus epidermidis (strain ATCC 35984 / DSM 28319 / BCRC 17069 / CCUG 31568 / BM 3577 / RP62A).